A 396-amino-acid chain; its full sequence is uncharacterized protein (396 aa).

Lys-219 bears the N6-(pyridoxal phosphate)lysine mark.

This sequence belongs to the class-V pyridoxal-phosphate-dependent aminotransferase family. Pyridoxal 5'-phosphate is required as a cofactor.

The protein localises to the cytoplasm. Its subcellular location is the nucleus. This is an uncharacterized protein from Schizosaccharomyces pombe (strain 972 / ATCC 24843) (Fission yeast).